A 419-amino-acid polypeptide reads, in one-letter code: MLTAVVGLQFGDEGKGKFVDYLSGNINNIARFNGGANAGHCVQHGNLRGSFSQLPASLNKKNLYICQGALISLPILVKEIDFIKKEDIDSHIFIDPRCHIVLPLHAELNRASEKYKGKQKIGSVGVGVGACVEDKANRHGIRLIDTFDKEKLRSKLEFLWSIREKQINHVFNAQASLDFEEMLETTHQYGKRIEPYFTFTNEIIGDLLNSGEDVLLETSQATFLDNSFGTYPYTVAYQTLVQTCFAMIGIPAQKMHIVGVMKSYMIRVGNGPFPTELSTEQADYIRERGNEYGTVSKRPRRCGWLDLSLIKHAVKLNGVIELAITNVDVLAGLDEIKVAVAYEIDDKLVCCDNALLQLDRAKPIYKTFKSWSTLNSSYTDLTELPIELIDFLSFIQDYTGVPIKYISYGPDRNQTLVVK.

11 to 17 serves as a coordination point for GTP; it reads GDEGKGK. The active-site Proton acceptor is aspartate 12. Mg(2+) contacts are provided by aspartate 12 and glycine 39. IMP-binding positions include 12 to 15, 37 to 40, arginine 138, glutamine 220, and arginine 298; these read DEGK and NAGH. The Proton donor role is filled by histidine 40. 294–300 is a substrate binding site; sequence TVSKRPR. Residues arginine 300, 326–328, and 407–409 contribute to the GTP site; these read NVD and SYG.

This sequence belongs to the adenylosuccinate synthetase family. Homodimer. Mg(2+) serves as cofactor.

It localises to the cytoplasm. The catalysed reaction is IMP + L-aspartate + GTP = N(6)-(1,2-dicarboxyethyl)-AMP + GDP + phosphate + 2 H(+). The protein operates within purine metabolism; AMP biosynthesis via de novo pathway; AMP from IMP: step 1/2. Plays an important role in the de novo pathway of purine nucleotide biosynthesis. Catalyzes the first committed step in the biosynthesis of AMP from IMP. The protein is Adenylosuccinate synthetase 1 of Photorhabdus laumondii subsp. laumondii (strain DSM 15139 / CIP 105565 / TT01) (Photorhabdus luminescens subsp. laumondii).